A 221-amino-acid polypeptide reads, in one-letter code: PKHD-type hydroxylase A9601_13531 (221 aa).

In terms of domain architecture, Fe2OG dioxygenase spans 80-174 (LIHGIMFTKS…RIVCVGWIES (95 aa)). Fe cation is bound by residues histidine 98, aspartate 100, and histidine 155. Arginine 165 provides a ligand contact to 2-oxoglutarate.

The cofactor is Fe(2+). L-ascorbate is required as a cofactor.

This is PKHD-type hydroxylase A9601_13531 from Prochlorococcus marinus (strain AS9601).